A 155-amino-acid chain; its full sequence is Small ribosomal subunit protein eS19 (155 aa).

This sequence belongs to the eukaryotic ribosomal protein eS19 family. Component of the small ribosomal subunit.

It localises to the cytoplasm. Its function is as follows. Component of the small ribosomal subunit. The ribosome is a large ribonucleoprotein complex responsible for the synthesis of proteins in the cell. Required for proper maturation of the small (40S) ribosomal subunit. This is Small ribosomal subunit protein eS19 (RPS19) from Entamoeba histolytica (strain ATCC 30459 / HM-1:IMSS / ABRM).